The following is a 121-amino-acid chain: Small ribosomal subunit protein uS13 (121 aa).

The interval 91-121 (HRRGLPVRGQNSKNNARTRKGPRRTVANKKK) is disordered. A compositionally biased stretch (basic residues) spans 106 to 121 (ARTRKGPRRTVANKKK).

This sequence belongs to the universal ribosomal protein uS13 family. In terms of assembly, part of the 30S ribosomal subunit. Forms a loose heterodimer with protein S19. Forms two bridges to the 50S subunit in the 70S ribosome.

Located at the top of the head of the 30S subunit, it contacts several helices of the 16S rRNA. In the 70S ribosome it contacts the 23S rRNA (bridge B1a) and protein L5 of the 50S subunit (bridge B1b), connecting the 2 subunits; these bridges are implicated in subunit movement. Contacts the tRNAs in the A and P-sites. This Bacillus cereus (strain AH187) protein is Small ribosomal subunit protein uS13.